Here is a 714-residue protein sequence, read N- to C-terminus: Epithelial splicing regulatory protein 1 (714 aa).

RRM domains are found at residues 225 to 302, 326 to 406, and 450 to 530; these read TVIR…KATG, IIVR…KSTA, and DCVR…ACSA.

This sequence belongs to the ESRP family.

The protein localises to the nucleus. Its function is as follows. mRNA splicing factor that regulates the formation of epithelial cell-specific isoforms. Specifically regulates the expression of FGFR2-IIIb, an epithelial cell-specific isoform of fgfr2. Acts by directly binding specific sequences in mRNAs. Binds the GU-rich sequence motifs in the ISE/ISS-3, a cis-element regulatory region present in the mRNA of fgfr2. In Danio rerio (Zebrafish), this protein is Epithelial splicing regulatory protein 1 (esrp1).